The primary structure comprises 147 residues: Nucleoside diphosphate kinase (147 aa).

ATP contacts are provided by K11, F59, R87, T93, R104, and N114. The active-site Pros-phosphohistidine intermediate is H117.

The protein belongs to the NDK family. Homotetramer. Mg(2+) is required as a cofactor.

Its subcellular location is the cytoplasm. The enzyme catalyses a 2'-deoxyribonucleoside 5'-diphosphate + ATP = a 2'-deoxyribonucleoside 5'-triphosphate + ADP. It catalyses the reaction a ribonucleoside 5'-diphosphate + ATP = a ribonucleoside 5'-triphosphate + ADP. In terms of biological role, major role in the synthesis of nucleoside triphosphates other than ATP. The ATP gamma phosphate is transferred to the NDP beta phosphate via a ping-pong mechanism, using a phosphorylated active-site intermediate. In Anaeromyxobacter sp. (strain K), this protein is Nucleoside diphosphate kinase.